A 25-amino-acid chain; its full sequence is Caerin-2.2 (25 aa).

This sequence belongs to the frog skin active peptide (FSAP) family. Caerin subfamily. In terms of tissue distribution, expressed by the skin parotoid and/or rostral glands.

It localises to the secreted. Its function is as follows. Antimicrobial peptide, that adopts an alpha helical conformation which can disrupt bacterial membranes. Each caerin displays a different antimicrobial specificity. The sequence is that of Caerin-2.2 from Ranoidea caerulea (Green tree frog).